Consider the following 278-residue polypeptide: Translation initiation factor IF-3, mitochondrial (278 aa).

The N-terminal 31 residues, 1 to 31, are a transit peptide targeting the mitochondrion; that stretch reads MAALFLKRLTLQTVKSENSCIRCFGKHILQK. The interval 249–278 is disordered; sequence KAYKETQETQERDTLNKDHGNDKESNVLHQ.

This sequence belongs to the IF-3 family.

Its subcellular location is the mitochondrion. Its function is as follows. IF-3 binds to the 28S ribosomal subunit and shifts the equilibrium between 55S ribosomes and their 39S and 28S subunits in favor of the free subunits, thus enhancing the availability of 28S subunits on which protein synthesis initiation begins. This Homo sapiens (Human) protein is Translation initiation factor IF-3, mitochondrial (MTIF3).